Consider the following 91-residue polypeptide: Small ribosomal subunit protein uS17 (91 aa).

It belongs to the universal ribosomal protein uS17 family. As to quaternary structure, part of the 30S ribosomal subunit.

Functionally, one of the primary rRNA binding proteins, it binds specifically to the 5'-end of 16S ribosomal RNA. The polypeptide is Small ribosomal subunit protein uS17 (Salinispora tropica (strain ATCC BAA-916 / DSM 44818 / JCM 13857 / NBRC 105044 / CNB-440)).